A 500-amino-acid polypeptide reads, in one-letter code: ATP synthase subunit alpha (500 aa).

168-175 (GDRQTGKT) serves as a coordination point for ATP.

It belongs to the ATPase alpha/beta chains family. As to quaternary structure, F-type ATPases have 2 components, CF(1) - the catalytic core - and CF(0) - the membrane proton channel. CF(1) has five subunits: alpha(3), beta(3), gamma(1), delta(1), epsilon(1). CF(0) has three main subunits: a(1), b(2) and c(9-12). The alpha and beta chains form an alternating ring which encloses part of the gamma chain. CF(1) is attached to CF(0) by a central stalk formed by the gamma and epsilon chains, while a peripheral stalk is formed by the delta and b chains.

Its subcellular location is the cell membrane. It carries out the reaction ATP + H2O + 4 H(+)(in) = ADP + phosphate + 5 H(+)(out). In terms of biological role, produces ATP from ADP in the presence of a proton gradient across the membrane. The alpha chain is a regulatory subunit. The sequence is that of ATP synthase subunit alpha from Streptococcus suis (strain 98HAH33).